The sequence spans 96 residues: UPF0235 protein ESA_00387 (96 aa).

Belongs to the UPF0235 family.

In Cronobacter sakazakii (strain ATCC BAA-894) (Enterobacter sakazakii), this protein is UPF0235 protein ESA_00387.